We begin with the raw amino-acid sequence, 140 residues long: MALPKANRLKSRHDFQAVFREGLRRNSSHFTLRALKPSSAKKSSLDTAAKTQPADDVQDIPSTLIGVSISTKVSKRAVVRNRIKRQITAAMQQLLPRLAPGWKLVVIVKPTAAESKCGSQQFLQELEQLLAQTEVLHGHS.

Residues 33–54 (RALKPSSAKKSSLDTAAKTQPA) form a disordered region.

This sequence belongs to the RnpA family. In terms of assembly, consists of a catalytic RNA component (M1 or rnpB) and a protein subunit.

It catalyses the reaction Endonucleolytic cleavage of RNA, removing 5'-extranucleotides from tRNA precursor.. Its function is as follows. RNaseP catalyzes the removal of the 5'-leader sequence from pre-tRNA to produce the mature 5'-terminus. It can also cleave other RNA substrates such as 4.5S RNA. The protein component plays an auxiliary but essential role in vivo by binding to the 5'-leader sequence and broadening the substrate specificity of the ribozyme. The protein is Ribonuclease P protein component of Trichormus variabilis (strain ATCC 29413 / PCC 7937) (Anabaena variabilis).